A 236-amino-acid polypeptide reads, in one-letter code: Uridylate kinase (236 aa).

Lys10–Gly13 contributes to the ATP binding site. Residue Gly52 coordinates UMP. ATP-binding residues include Gly53 and Arg57. Residues Asp72 and Thr133 to Thr140 each bind UMP. Residues Thr160, Tyr166, and Asp169 each contribute to the ATP site.

Belongs to the UMP kinase family. Homohexamer.

Its subcellular location is the cytoplasm. It carries out the reaction UMP + ATP = UDP + ADP. It participates in pyrimidine metabolism; CTP biosynthesis via de novo pathway; UDP from UMP (UMPK route): step 1/1. Inhibited by UTP. In terms of biological role, catalyzes the reversible phosphorylation of UMP to UDP. This Polaromonas sp. (strain JS666 / ATCC BAA-500) protein is Uridylate kinase.